The primary structure comprises 322 residues: Acetyl-coenzyme A carboxylase carboxyl transferase subunit alpha (322 aa).

In terms of domain architecture, CoA carboxyltransferase C-terminal spans 39-293 (RLAAKSQQLT…KRALAESLRQ (255 aa)).

It belongs to the AccA family. As to quaternary structure, acetyl-CoA carboxylase is a heterohexamer composed of biotin carboxyl carrier protein (AccB), biotin carboxylase (AccC) and two subunits each of ACCase subunit alpha (AccA) and ACCase subunit beta (AccD).

Its subcellular location is the cytoplasm. The enzyme catalyses N(6)-carboxybiotinyl-L-lysyl-[protein] + acetyl-CoA = N(6)-biotinyl-L-lysyl-[protein] + malonyl-CoA. The protein operates within lipid metabolism; malonyl-CoA biosynthesis; malonyl-CoA from acetyl-CoA: step 1/1. Its function is as follows. Component of the acetyl coenzyme A carboxylase (ACC) complex. First, biotin carboxylase catalyzes the carboxylation of biotin on its carrier protein (BCCP) and then the CO(2) group is transferred by the carboxyltransferase to acetyl-CoA to form malonyl-CoA. This Ralstonia nicotianae (strain ATCC BAA-1114 / GMI1000) (Ralstonia solanacearum) protein is Acetyl-coenzyme A carboxylase carboxyl transferase subunit alpha.